The primary structure comprises 335 residues: DNA-directed RNA polymerase RPB7 homolog (335 aa).

Belongs to the Asfivirus DNA-directed RNA polymerase RPB7 homolog family. In terms of assembly, part of the viral DNA-directed RNA polymerase that consists of 8 polII-like subunits (RPB1, RPB2, RPB3, RPB5, RPB6, RPB7, RPB9, RPB10), a capping enzyme and a termination factor.

It is found in the host cytoplasm. Its subcellular location is the virion. Component of the DNA-directed RNA polymerase (RNAP) that catalyzes the transcription in the cytoplasm of viral DNA into RNA using the four ribonucleoside triphosphates as substrates. The protein is DNA-directed RNA polymerase RPB7 homolog of Ornithodoros (relapsing fever ticks).